Consider the following 500-residue polypeptide: Probable cytosol aminopeptidase (500 aa).

The Mn(2+) site is built by Lys268 and Asp273. Lys280 is an active-site residue. Mn(2+) is bound by residues Asp291, Asp350, and Glu352. Arg354 is an active-site residue.

The protein belongs to the peptidase M17 family. Mn(2+) is required as a cofactor.

The protein resides in the cytoplasm. It carries out the reaction Release of an N-terminal amino acid, Xaa-|-Yaa-, in which Xaa is preferably Leu, but may be other amino acids including Pro although not Arg or Lys, and Yaa may be Pro. Amino acid amides and methyl esters are also readily hydrolyzed, but rates on arylamides are exceedingly low.. The catalysed reaction is Release of an N-terminal amino acid, preferentially leucine, but not glutamic or aspartic acids.. Presumably involved in the processing and regular turnover of intracellular proteins. Catalyzes the removal of unsubstituted N-terminal amino acids from various peptides. This chain is Probable cytosol aminopeptidase, found in Alkaliphilus metalliredigens (strain QYMF).